The sequence spans 132 residues: UPF0332 protein TM_1000 (132 aa).

It belongs to the UPF0332 family.

This is UPF0332 protein TM_1000 from Thermotoga maritima (strain ATCC 43589 / DSM 3109 / JCM 10099 / NBRC 100826 / MSB8).